The primary structure comprises 412 residues: ATP phosphoribosyltransferase regulatory subunit (412 aa).

Belongs to the class-II aminoacyl-tRNA synthetase family. HisZ subfamily. In terms of assembly, heteromultimer composed of HisG and HisZ subunits.

The protein resides in the cytoplasm. The protein operates within amino-acid biosynthesis; L-histidine biosynthesis; L-histidine from 5-phospho-alpha-D-ribose 1-diphosphate: step 1/9. Its function is as follows. Required for the first step of histidine biosynthesis. May allow the feedback regulation of ATP phosphoribosyltransferase activity by histidine. The polypeptide is ATP phosphoribosyltransferase regulatory subunit (Dehalococcoides mccartyi (strain CBDB1)).